Here is a 179-residue protein sequence, read N- to C-terminus: Dual-action ribosomal maturation protein DarP (179 aa).

The protein belongs to the DarP family.

The protein resides in the cytoplasm. In terms of biological role, member of a network of 50S ribosomal subunit biogenesis factors which assembles along the 30S-50S interface, preventing incorrect 23S rRNA structures from forming. Promotes peptidyl transferase center (PTC) maturation. This chain is Dual-action ribosomal maturation protein DarP, found in Aliivibrio fischeri (strain ATCC 700601 / ES114) (Vibrio fischeri).